Reading from the N-terminus, the 218-residue chain is Large ribosomal subunit protein uL3 (218 aa).

Residues 132-152 (FKGQGASHGTQAVHRRPGSIG) are disordered.

The protein belongs to the universal ribosomal protein uL3 family. As to quaternary structure, part of the 50S ribosomal subunit. Forms a cluster with proteins L14 and L19.

Its function is as follows. One of the primary rRNA binding proteins, it binds directly near the 3'-end of the 23S rRNA, where it nucleates assembly of the 50S subunit. The polypeptide is Large ribosomal subunit protein uL3 (Rhodococcus erythropolis (strain PR4 / NBRC 100887)).